A 352-amino-acid chain; its full sequence is Histidine biosynthesis bifunctional protein HisB (352 aa).

A histidinol-phosphatase region spans residues 1 to 164 (MSQKILFIDR…EIENEILSSF (164 aa)). Residue D9 is the Nucleophile of the active site. Residues D9 and D11 each coordinate Mg(2+). The Proton donor role is filled by D11. Residues C93, H95, C101, and C103 each contribute to the Zn(2+) site. D130 lines the Mg(2+) pocket. The interval 165-352 (RSASYQRTTK…ENLASSKGVI (188 aa)) is imidazoleglycerol-phosphate dehydratase.

In the N-terminal section; belongs to the histidinol-phosphatase family. This sequence in the C-terminal section; belongs to the imidazoleglycerol-phosphate dehydratase family. It depends on Mg(2+) as a cofactor. Requires Zn(2+) as cofactor.

It is found in the cytoplasm. The catalysed reaction is D-erythro-1-(imidazol-4-yl)glycerol 3-phosphate = 3-(imidazol-4-yl)-2-oxopropyl phosphate + H2O. It catalyses the reaction L-histidinol phosphate + H2O = L-histidinol + phosphate. The protein operates within amino-acid biosynthesis; L-histidine biosynthesis; L-histidine from 5-phospho-alpha-D-ribose 1-diphosphate: step 6/9. It functions in the pathway amino-acid biosynthesis; L-histidine biosynthesis; L-histidine from 5-phospho-alpha-D-ribose 1-diphosphate: step 8/9. The chain is Histidine biosynthesis bifunctional protein HisB from Campylobacter jejuni subsp. jejuni serotype O:2 (strain ATCC 700819 / NCTC 11168).